Here is a 113-residue protein sequence, read N- to C-terminus: UPF0482 protein YnfB (113 aa).

A signal peptide spans 1–28; that stretch reads MKITLSKRIGLLAFLLPCALALSTTVHA.

Belongs to the UPF0482 family.

The chain is UPF0482 protein YnfB from Escherichia coli O127:H6 (strain E2348/69 / EPEC).